Consider the following 89-residue polypeptide: Small ribosomal subunit protein uS15 (89 aa).

The protein belongs to the universal ribosomal protein uS15 family. Part of the 30S ribosomal subunit. Forms a bridge to the 50S subunit in the 70S ribosome, contacting the 23S rRNA.

One of the primary rRNA binding proteins, it binds directly to 16S rRNA where it helps nucleate assembly of the platform of the 30S subunit by binding and bridging several RNA helices of the 16S rRNA. Its function is as follows. Forms an intersubunit bridge (bridge B4) with the 23S rRNA of the 50S subunit in the ribosome. The polypeptide is Small ribosomal subunit protein uS15 (Chlorobium chlorochromatii (strain CaD3)).